The following is a 227-amino-acid chain: 2,3-bisphosphoglycerate-dependent phosphoglycerate mutase (227 aa).

Substrate-binding positions include 7–14 (RHGQSEWN), 20–21 (TG), arginine 59, 86–89 (ERHY), lysine 97, 113–114 (RR), and 182–183 (GN). Histidine 8 acts as the Tele-phosphohistidine intermediate in catalysis. Catalysis depends on glutamate 86, which acts as the Proton donor/acceptor.

The protein belongs to the phosphoglycerate mutase family. BPG-dependent PGAM subfamily. In terms of assembly, homodimer.

The catalysed reaction is (2R)-2-phosphoglycerate = (2R)-3-phosphoglycerate. Its pathway is carbohydrate degradation; glycolysis; pyruvate from D-glyceraldehyde 3-phosphate: step 3/5. In terms of biological role, catalyzes the interconversion of 2-phosphoglycerate and 3-phosphoglycerate. The polypeptide is 2,3-bisphosphoglycerate-dependent phosphoglycerate mutase (Neisseria gonorrhoeae (strain ATCC 700825 / FA 1090)).